A 1129-amino-acid polypeptide reads, in one-letter code: Translation initiation factor IF-2 (1129 aa).

Composition is skewed to low complexity over residues 33–42 (AARSHSSSIS) and 56–99 (GGSP…AAKP). Disordered regions lie at residues 33 to 462 (AARS…IGEN) and 485 to 515 (SLAR…ETAR). The segment covering 100–112 (SPKPSAPSRPEAP) has biased composition (pro residues). Residues 135-147 (STPAAAAPAAAPS) are compositionally biased toward low complexity. Residues 148-161 (APAPSAPTPRPKPT) are compositionally biased toward pro residues. Low complexity predominate over residues 162 to 175 (APKASAPAPTASAP). 2 stretches are compositionally biased toward pro residues: residues 176 to 191 (SAPP…PAPA) and 211 to 221 (PTAPPTRPQPK). Residues 257–273 (GQRPGVSPRPSGPPGQR) are compositionally biased toward low complexity. Basic and acidic residues predominate over residues 431–445 (GRPDWDDSAKLEALR). Basic residues-rich tracts occupy residues 490 to 499 (SKPRTKHKPA) and 506 to 515 (IRKRRKETAR). Residues 621–793 (RRPPVVTVMG…ILLVTEVEDL (173 aa)) form the tr-type G domain. The G1 stretch occupies residues 630–637 (GHVDHGKT). 630-637 (GHVDHGKT) contacts GTP. Residues 655 to 659 (GITQH) are G2. The G3 stretch occupies residues 680-683 (DTPG). GTP is bound by residues 680 to 684 (DTPGH) and 734 to 737 (NKID). The tract at residues 734–737 (NKID) is G4. Residues 770 to 772 (SAL) are G5.

Belongs to the TRAFAC class translation factor GTPase superfamily. Classic translation factor GTPase family. IF-2 subfamily.

Its subcellular location is the cytoplasm. One of the essential components for the initiation of protein synthesis. Protects formylmethionyl-tRNA from spontaneous hydrolysis and promotes its binding to the 30S ribosomal subunits. Also involved in the hydrolysis of GTP during the formation of the 70S ribosomal complex. The sequence is that of Translation initiation factor IF-2 from Synechococcus sp. (strain CC9311).